Reading from the N-terminus, the 435-residue chain is Elongation factor 1-alpha (435 aa).

Positions 4-229 (KPHLNLIVIG…DQLEIPPKPV (226 aa)) constitute a tr-type G domain. Residues 13-20 (GHVDHGKS) are G1. Residue 13–20 (GHVDHGKS) participates in GTP binding. Ser20 serves as a coordination point for Mg(2+). The segment at 69–73 (GVTIN) is G2. The segment at 90 to 93 (DAPG) is G3. Residues 90–94 (DAPGH) and 152–155 (NKMD) contribute to the GTP site. The interval 152-155 (NKMD) is G4. Residues 193 to 195 (VAP) are G5.

It belongs to the TRAFAC class translation factor GTPase superfamily. Classic translation factor GTPase family. EF-Tu/EF-1A subfamily.

The protein localises to the cytoplasm. The enzyme catalyses GTP + H2O = GDP + phosphate + H(+). Functionally, GTP hydrolase that promotes the GTP-dependent binding of aminoacyl-tRNA to the A-site of ribosomes during protein biosynthesis. This is Elongation factor 1-alpha from Sulfolobus acidocaldarius (strain ATCC 33909 / DSM 639 / JCM 8929 / NBRC 15157 / NCIMB 11770).